Here is a 233-residue protein sequence, read N- to C-terminus: Demethylmenaquinone methyltransferase (233 aa).

S-adenosyl-L-methionine contacts are provided by residues Thr-60, Asp-81, and 106 to 107; that span reads DA.

This sequence belongs to the class I-like SAM-binding methyltransferase superfamily. MenG/UbiE family.

It carries out the reaction a 2-demethylmenaquinol + S-adenosyl-L-methionine = a menaquinol + S-adenosyl-L-homocysteine + H(+). It participates in quinol/quinone metabolism; menaquinone biosynthesis; menaquinol from 1,4-dihydroxy-2-naphthoate: step 2/2. Its function is as follows. Methyltransferase required for the conversion of demethylmenaquinol (DMKH2) to menaquinol (MKH2). In Staphylococcus saprophyticus subsp. saprophyticus (strain ATCC 15305 / DSM 20229 / NCIMB 8711 / NCTC 7292 / S-41), this protein is Demethylmenaquinone methyltransferase.